The following is a 451-amino-acid chain: Bifunctional protein GlmU (451 aa).

A pyrophosphorylase region spans residues 1–217; the sequence is MKTLILAAGL…IDEVTGVNDR (217 aa). Residues 6-9, Lys-20, Gln-68, 73-74, 95-97, Gly-134, Glu-146, Asn-161, and Asn-215 each bind UDP-N-acetyl-alpha-D-glucosamine; these read LAAG, GT, and YGD. Asp-97 lines the Mg(2+) pocket. Residue Asn-215 participates in Mg(2+) binding. The tract at residues 218–238 is linker; sequence IQLSKLEKNMRKRINEKLMRE. The interval 239–451 is N-acetyltransferase; the sequence is GVRIIDPESV…GGNQNADSKE (213 aa). Arg-320 and Lys-338 together coordinate UDP-N-acetyl-alpha-D-glucosamine. The Proton acceptor role is filled by His-350. 2 residues coordinate UDP-N-acetyl-alpha-D-glucosamine: Tyr-353 and Asn-364. Residues Ala-367, 373-374, Ser-392, Ala-410, and Arg-427 contribute to the acetyl-CoA site; that span reads NY.

In the N-terminal section; belongs to the N-acetylglucosamine-1-phosphate uridyltransferase family. It in the C-terminal section; belongs to the transferase hexapeptide repeat family. In terms of assembly, homotrimer. Requires Mg(2+) as cofactor.

It localises to the cytoplasm. The enzyme catalyses alpha-D-glucosamine 1-phosphate + acetyl-CoA = N-acetyl-alpha-D-glucosamine 1-phosphate + CoA + H(+). The catalysed reaction is N-acetyl-alpha-D-glucosamine 1-phosphate + UTP + H(+) = UDP-N-acetyl-alpha-D-glucosamine + diphosphate. It participates in nucleotide-sugar biosynthesis; UDP-N-acetyl-alpha-D-glucosamine biosynthesis; N-acetyl-alpha-D-glucosamine 1-phosphate from alpha-D-glucosamine 6-phosphate (route II): step 2/2. Its pathway is nucleotide-sugar biosynthesis; UDP-N-acetyl-alpha-D-glucosamine biosynthesis; UDP-N-acetyl-alpha-D-glucosamine from N-acetyl-alpha-D-glucosamine 1-phosphate: step 1/1. It functions in the pathway bacterial outer membrane biogenesis; LPS lipid A biosynthesis. Catalyzes the last two sequential reactions in the de novo biosynthetic pathway for UDP-N-acetylglucosamine (UDP-GlcNAc). The C-terminal domain catalyzes the transfer of acetyl group from acetyl coenzyme A to glucosamine-1-phosphate (GlcN-1-P) to produce N-acetylglucosamine-1-phosphate (GlcNAc-1-P), which is converted into UDP-GlcNAc by the transfer of uridine 5-monophosphate (from uridine 5-triphosphate), a reaction catalyzed by the N-terminal domain. The chain is Bifunctional protein GlmU from Thermosipho africanus (strain TCF52B).